The primary structure comprises 125 residues: Small ribosomal subunit protein uS12c (125 aa).

It belongs to the universal ribosomal protein uS12 family. In terms of assembly, part of the 30S ribosomal subunit.

It is found in the plastid. Functionally, with S4 and S5 plays an important role in translational accuracy. Located at the interface of the 30S and 50S subunits. This chain is Small ribosomal subunit protein uS12c (rps12), found in Euglena longa (Euglenophycean alga).